The chain runs to 1401 residues: Condensin complex subunit 1 (1401 aa).

The segment at 1–603 is interactions with SMC2 and SMC4; it reads MAPQMYEFHL…TVCKNKPNMS (603 aa). Serine 20 and serine 585 each carry phosphoserine. Over residues 576 to 596 the composition is skewed to polar residues; it reads STQEKNPRESTGNMVTGQTVC. Disordered stretches follow at residues 576–611, 956–978, and 1303–1401; these read STQE…SRGN, REEQ…TTME, and LEIG…RHRS. Residues 956–971 are compositionally biased toward basic and acidic residues; that stretch reads REEQEHKTKDPKEKNT. The span at 1308-1336 shows a compositional bias: polar residues; sequence AGSQRAPSAKKPSTGSRYQPLASTASDND. Serine 1310, serine 1315, and serine 1330 each carry phosphoserine. Position 1331 is a phosphothreonine (threonine 1331). Serine 1333 carries the post-translational modification Phosphoserine. Threonine 1339 is subject to Phosphothreonine. Positions 1342-1362 match the Bipartite nuclear localization signal motif; sequence PRRTTRRHPNTQQRASKKKPK. Residues 1345–1362 show a composition bias toward basic residues; it reads TTRRHPNTQQRASKKKPK. 5 positions are modified to phosphoserine: serine 1366, serine 1367, serine 1370, serine 1371, and serine 1376. Over residues 1369-1382 the composition is skewed to acidic residues; the sequence is ESSEEDLSAEMTED. Threonine 1384 and threonine 1389 each carry phosphothreonine; by CDK1. Serine 1395 is modified (phosphoserine).

This sequence belongs to the CND1 (condensin subunit 1) family. As to quaternary structure, component of the condensin complex, which contains the SMC2 and SMC4 heterodimer, and three non SMC subunits that probably regulate the complex: NCAPH/BRRN1, NCAPD2/CAPD2 and NCAPG. Interacts with histones H1 and H3. In terms of processing, phosphorylated by CDK1. Its phosphorylation, as well as that of NCAPH and NCAPG subunits, activates the condensin complex and is required for chromosome condensation.

Its subcellular location is the nucleus. The protein resides in the cytoplasm. It localises to the chromosome. Its function is as follows. Regulatory subunit of the condensin complex, a complex required for conversion of interphase chromatin into mitotic-like condense chromosomes. The condensin complex probably introduces positive supercoils into relaxed DNA in the presence of type I topoisomerases and converts nicked DNA into positive knotted forms in the presence of type II topoisomerases. May target the condensin complex to DNA via its C-terminal domain. May promote the resolution of double-strand DNA catenanes (intertwines) between sister chromatids. Condensin-mediated compaction likely increases tension in catenated sister chromatids, providing directionality for type II topoisomerase-mediated strand exchanges toward chromatid decatenation. Required for decatenation of non-centromeric ultrafine DNA bridges during anaphase. Early in neurogenesis, may play an essential role to ensure accurate mitotic chromosome condensation in neuron stem cells, ultimately affecting neuron pool and cortex size. This is Condensin complex subunit 1 from Homo sapiens (Human).